The primary structure comprises 272 residues: Glutamate racemase (272 aa).

Substrate is bound by residues 16 to 17 (DS) and 48 to 49 (YG). Cys79 serves as the catalytic Proton donor/acceptor. Position 80-81 (80-81 (NT)) interacts with substrate. Residue Cys191 is the Proton donor/acceptor of the active site. Position 192 to 193 (192 to 193 (TH)) interacts with substrate.

It belongs to the aspartate/glutamate racemases family.

The enzyme catalyses L-glutamate = D-glutamate. It participates in cell wall biogenesis; peptidoglycan biosynthesis. Its function is as follows. Provides the (R)-glutamate required for cell wall biosynthesis. The sequence is that of Glutamate racemase from Chlorobaculum parvum (strain DSM 263 / NCIMB 8327) (Chlorobium vibrioforme subsp. thiosulfatophilum).